Here is a 337-residue protein sequence, read N- to C-terminus: RNA 3'-terminal phosphate cyclase (337 aa).

Residues Q101 and 282–285 (HMSD) each bind ATP. Catalysis depends on H306, which acts as the Tele-AMP-histidine intermediate.

The protein belongs to the RNA 3'-terminal cyclase family. Type 1 subfamily.

It is found in the cytoplasm. It carries out the reaction a 3'-end 3'-phospho-ribonucleotide-RNA + ATP = a 3'-end 2',3'-cyclophospho-ribonucleotide-RNA + AMP + diphosphate. Functionally, catalyzes the conversion of 3'-phosphate to a 2',3'-cyclic phosphodiester at the end of RNA. The mechanism of action of the enzyme occurs in 3 steps: (A) adenylation of the enzyme by ATP; (B) transfer of adenylate to an RNA-N3'P to produce RNA-N3'PP5'A; (C) and attack of the adjacent 2'-hydroxyl on the 3'-phosphorus in the diester linkage to produce the cyclic end product. The biological role of this enzyme is unknown but it is likely to function in some aspects of cellular RNA processing. The sequence is that of RNA 3'-terminal phosphate cyclase from Saccharolobus islandicus (strain L.S.2.15 / Lassen #1) (Sulfolobus islandicus).